A 380-amino-acid chain; its full sequence is Bifunctional dihydropteroate synthase/dihydropteroate reductase (380 aa).

Residues 1 to 104 (MIVKRLNPDA…SQPFGLKHLA (104 aa)) are dihydropteroate reductase. A dihydropteroate synthase region spans residues 105–380 (QELKSHLKAP…KVFKSLEETD (276 aa)). A Pterin-binding domain is found at 119–371 (PQIMAVLNLT…DIDEHIDLIK (253 aa)). Asn126 contributes to the Mg(2+) binding site. (7,8-dihydropterin-6-yl)methyl diphosphate-binding positions include Asp202, Asn221, Asp289, Lys325, and 359–361 (RVH).

This sequence in the C-terminal section; belongs to the DHPS family. FAD is required as a cofactor. The cofactor is FMN. Mg(2+) serves as cofactor.

It carries out the reaction (7,8-dihydropterin-6-yl)methyl diphosphate + 4-aminobenzoate = 7,8-dihydropteroate + diphosphate. It catalyses the reaction (6S)-5,6,7,8-tetrahydropteroate + NAD(+) = 7,8-dihydropteroate + NADH + H(+). The protein operates within cofactor biosynthesis; tetrahydrofolate biosynthesis; 7,8-dihydrofolate from 2-amino-4-hydroxy-6-hydroxymethyl-7,8-dihydropteridine diphosphate and 4-aminobenzoate: step 1/2. Its function is as follows. Bifunctional enzyme that catalyzes the formation of dihydropteroate, the immediate precursor of folic acid and the reduction of dihydropteroate to tetrahydropteroate. This is Bifunctional dihydropteroate synthase/dihydropteroate reductase from Helicobacter pylori (strain ATCC 700392 / 26695) (Campylobacter pylori).